The primary structure comprises 349 residues: Bifunctional nitrilase/nitrile hydratase NIT4A (349 aa).

In terms of domain architecture, CN hydrolase spans Val-29 to Leu-301. Glu-69 acts as the Proton acceptor in catalysis. Catalysis depends on Lys-156, which acts as the Proton donor. Cys-190 functions as the Nucleophile in the catalytic mechanism.

Belongs to the carbon-nitrogen hydrolase superfamily. Nitrilase family. As to expression, expressed in roots, stems, cotyledons, leaves and flowers.

The protein resides in the cell membrane. The catalysed reaction is a nitrile + 2 H2O = a carboxylate + NH4(+). It catalyses the reaction 3-cyano-L-alanine + 2 H2O = L-aspartate + NH4(+). It carries out the reaction L-asparagine = 3-cyano-L-alanine + H2O. In terms of biological role, highly specific for beta-cyano-L-alanine (Ala(CN)). Low activity with 3-phenylpropionitrile (PPN). Not associated with auxin production but may be involved in cyanide detoxification. This Nicotiana tabacum (Common tobacco) protein is Bifunctional nitrilase/nitrile hydratase NIT4A (NIT4A).